A 454-amino-acid chain; its full sequence is MMFSRFFKAVPARAPAFSSPLPVYQARTMATVRNQRPVERATFTIRDGPIFHGKSFGARTTISGEAVFTTSLVGYPESLTDPSYRGQILVFTQPLIGNYGVPSTERDRHGLLKYFESPNLQAAGVVVADVAEQYSHWTAVQSLGEWCAREGVPAISGVDTRAIVTYLREQGSSLARITVGEEYDADQDEAFTDPEQIHLVRQVSTKAPFHVSAADPQCHVAVLDCGVKENILRSLVSRGASITVFPFDYPIHKVAHHFDGVFISNGPGDPTHCQDTTYHLRRLMETSQVPIFGICLGHQLLALAAGARTVKLKYGNRAHNIPALDLTTGRCHITSQNHGYAVDASTLPSDWKPYFVNLNDSSNEGMIHKSRPIFSTQFHPEAKGGPLDSSYLFDIYIDSVKKYKNSQLAFHPSRETIPSPLLVDLLPKERVDVAPTIGMQNVAAAAAAAAAATA.

Residues 1–29 constitute a mitochondrion transit peptide; sequence MMFSRFFKAVPARAPAFSSPLPVYQARTM. The 188-residue stretch at 219-406 folds into the Glutamine amidotransferase type-1 domain; sequence HVAVLDCGVK…IDSVKKYKNS (188 aa). The Nucleophile role is filled by C295. Catalysis depends on residues H379 and E381.

This sequence belongs to the CarA family. In terms of assembly, heterodimer composed of 2 chains; the small (or glutamine) chain promotes the hydrolysis of glutamine to ammonia, which is used by the large (or ammonia) chain to synthesize carbamoyl phosphate.

The protein resides in the mitochondrion matrix. The catalysed reaction is hydrogencarbonate + L-glutamine + 2 ATP + H2O = carbamoyl phosphate + L-glutamate + 2 ADP + phosphate + 2 H(+). The enzyme catalyses L-glutamine + H2O = L-glutamate + NH4(+). It participates in amino-acid biosynthesis; L-arginine biosynthesis; carbamoyl phosphate from bicarbonate: step 1/1. Its function is as follows. Small subunit of the arginine-specific carbamoyl phosphate synthase (CPSase). CPSase catalyzes the formation of carbamoyl phosphate from the ammonia moiety of glutamine, carbonate, and phosphate donated by ATP, the first step of the arginine biosynthetic pathway. The small subunit (glutamine amidotransferase) binds and cleaves glutamine to supply the large subunit with the substrate ammonia. This Emericella nidulans (strain FGSC A4 / ATCC 38163 / CBS 112.46 / NRRL 194 / M139) (Aspergillus nidulans) protein is Carbamoyl phosphate synthase arginine-specific small chain (cpa-1).